Here is a 337-residue protein sequence, read N- to C-terminus: 1-aminocyclopropane-1-carboxylate deaminase (337 aa).

An N6-(pyridoxal phosphate)lysine modification is found at K50.

It belongs to the ACC deaminase/D-cysteine desulfhydrase family. Homotrimer. Requires pyridoxal 5'-phosphate as cofactor.

It carries out the reaction 1-aminocyclopropane-1-carboxylate + H2O = 2-oxobutanoate + NH4(+). In terms of biological role, catalyzes a cyclopropane ring-opening reaction, the irreversible conversion of 1-aminocyclopropane-1-carboxylate (ACC) to ammonia and alpha-ketobutyrate. Allows growth on ACC as a nitrogen source. This is 1-aminocyclopropane-1-carboxylate deaminase from Mesorhizobium japonicum (strain LMG 29417 / CECT 9101 / MAFF 303099) (Mesorhizobium loti (strain MAFF 303099)).